A 635-amino-acid polypeptide reads, in one-letter code: MSVGVSTSAPLSPTSGTSVGMSTFSIMDYVVFVLLLVLSLAIGLYHACRGWGRHTVGELLMADRKMGCLPVALSLLATFQSAVAILGVPSEIYRFGTQYWFLGCCYFLGLLIPAHIFIPVFYRLHLTSAYEYLELRFNKTVRVCGTVTFIFQMVIYMGVVLYAPSLALNAVTGFDLWLSVLALGIVCTVYTALGGLKAVIWTDVFQTLVMFLGQLAVIIVGSAKVGGLGRVWAVASQHGRISGFELDPDPFVRHTFWTLAFGGVFMMLSLYGVNQAQVQRYLSSRTEKAAVLSCYAVFPFQQVSLCVGCLIGLVMFAYYQEYPMSIQQAQAAPDQFVLYFVMDLLKGLPGLPGLFIACLFSGSLSTISSAFNSLATVTMEDLIRPWFPEFSEARAIMLSRGLAFGYGLLCLGMAYISSQMGPVLQAAISIFGMVGGPLLGLFCLGMFFPCANPPGAVVGLLAGLVMAFWIGIGSIVTSMGSSMPPSPSNGSSFSLPTNLTVATVTTLMPLTTFSKPTGLQRFYSLSYLWYSAHNSTTVIVVGLIVSLLTGRMRGRSLNPATIYPVLPKLLSLLPLSCQKRLHCRSYGQDHLDTGLFPEKPRNGVLGDSRDKEAMALDGTAYQGSSSTCILQETSL.

3 consecutive transmembrane segments (helical) span residues phenylalanine 24–leucine 44, cysteine 68–valine 88, and phenylalanine 101–phenylalanine 121. Asparagine 138 carries N-linked (GlcNAc...) asparagine glycosylation. 9 consecutive transmembrane segments (helical) span residues valine 143 to alanine 163, leucine 176 to leucine 196, valine 199 to isoleucine 219, phenylalanine 256 to alanine 276, valine 297 to alanine 317, phenylalanine 336 to isoleucine 356, isoleucine 396 to isoleucine 416, isoleucine 428 to phenylalanine 448, and alanine 456 to valine 476. N-linked (GlcNAc...) asparagine glycans are attached at residues asparagine 489 and asparagine 498. The helical transmembrane segment at leucine 528–leucine 548 threads the bilayer.

It belongs to the sodium:solute symporter (SSF) (TC 2.A.21) family. In terms of assembly, interacts with PDZD11. May be glycosylated. As to expression, expressed in microvessels of the brain (at protein level). Expressed in heart, brain, placenta, lung, liver, skeletal muscle, kidney, and pancreas.

It localises to the cell membrane. It is found in the apical cell membrane. It carries out the reaction biotin(out) + 2 Na(+)(out) = biotin(in) + 2 Na(+)(in). The catalysed reaction is (R)-pantothenate(out) + 2 Na(+)(out) = (R)-pantothenate(in) + 2 Na(+)(in). It catalyses the reaction (R)-lipoate(out) + 2 Na(+)(out) = (R)-lipoate(in) + 2 Na(+)(in). The enzyme catalyses iodide(out) + 2 Na(+)(out) = iodide(in) + 2 Na(+)(in). Its function is as follows. Sodium-dependent multivitamin transporter that mediates the electrogenic transport of pantothenate, biotin, lipoate and iodide. Functions as a Na(+)-coupled substrate symporter where the stoichiometry of Na(+):substrate is 2:1, creating an electrochemical Na(+) gradient used as driving force for substrate uptake. Required for biotin and pantothenate uptake in the intestine across the brush border membrane. Plays a role in the maintenance of intestinal mucosa integrity, by providing the gut mucosa with biotin. Contributes to the luminal uptake of biotin and pantothenate into the brain across the blood-brain barrier. This Homo sapiens (Human) protein is Sodium-dependent multivitamin transporter.